The chain runs to 248 residues: 2,3-bisphosphoglycerate-dependent phosphoglycerate mutase (248 aa).

Substrate-binding positions include 8–15 (RHGESEWN), 21–22 (TG), Arg-60, 87–90 (ERHY), Lys-98, 114–115 (RR), and 183–184 (GN). Catalysis depends on His-9, which acts as the Tele-phosphohistidine intermediate. Glu-87 acts as the Proton donor/acceptor in catalysis.

Belongs to the phosphoglycerate mutase family. BPG-dependent PGAM subfamily.

It carries out the reaction (2R)-2-phosphoglycerate = (2R)-3-phosphoglycerate. It functions in the pathway carbohydrate degradation; glycolysis; pyruvate from D-glyceraldehyde 3-phosphate: step 3/5. Its function is as follows. Catalyzes the interconversion of 2-phosphoglycerate and 3-phosphoglycerate. The chain is 2,3-bisphosphoglycerate-dependent phosphoglycerate mutase from Borrelia hermsii (strain HS1 / DAH).